The chain runs to 1273 residues: DNA-directed RNA polymerase subunit beta (1273 aa).

Belongs to the RNA polymerase beta chain family. As to quaternary structure, the RNAP catalytic core consists of 2 alpha, 1 beta, 1 beta' and 1 omega subunit. When a sigma factor is associated with the core the holoenzyme is formed, which can initiate transcription.

It catalyses the reaction RNA(n) + a ribonucleoside 5'-triphosphate = RNA(n+1) + diphosphate. DNA-dependent RNA polymerase catalyzes the transcription of DNA into RNA using the four ribonucleoside triphosphates as substrates. The chain is DNA-directed RNA polymerase subunit beta from Onion yellows phytoplasma (strain OY-M).